We begin with the raw amino-acid sequence, 213 residues long: dTTP/UTP pyrophosphatase (213 aa).

Residue aspartate 92 is the Proton acceptor of the active site.

Belongs to the Maf family. YhdE subfamily. A divalent metal cation serves as cofactor.

Its subcellular location is the cytoplasm. The enzyme catalyses dTTP + H2O = dTMP + diphosphate + H(+). The catalysed reaction is UTP + H2O = UMP + diphosphate + H(+). Functionally, nucleoside triphosphate pyrophosphatase that hydrolyzes dTTP and UTP. May have a dual role in cell division arrest and in preventing the incorporation of modified nucleotides into cellular nucleic acids. The chain is dTTP/UTP pyrophosphatase from Granulibacter bethesdensis (strain ATCC BAA-1260 / CGDNIH1).